The sequence spans 148 residues: 3-dehydroquinate dehydratase (148 aa).

Tyr-23 serves as the catalytic Proton acceptor. 3 residues coordinate substrate: Asn-74, His-80, and Asp-87. The active-site Proton donor is His-100. Substrate is bound by residues 101-102 (IS) and Arg-111.

Belongs to the type-II 3-dehydroquinase family. Homododecamer.

It carries out the reaction 3-dehydroquinate = 3-dehydroshikimate + H2O. It functions in the pathway metabolic intermediate biosynthesis; chorismate biosynthesis; chorismate from D-erythrose 4-phosphate and phosphoenolpyruvate: step 3/7. Functionally, catalyzes a trans-dehydration via an enolate intermediate. The polypeptide is 3-dehydroquinate dehydratase (Halothermothrix orenii (strain H 168 / OCM 544 / DSM 9562)).